A 230-amino-acid chain; its full sequence is NAD(P)H-hydrate epimerase (230 aa).

In terms of domain architecture, YjeF N-terminal spans 11–218 (AIAVDQELFN…ALQRKYELNL (208 aa)). 61-65 (NNGGD) is a binding site for (6S)-NADPHX. Asparagine 62 and aspartate 126 together coordinate K(+). Residues 130–136 (GFSFKPP) and aspartate 159 contribute to the (6S)-NADPHX site. A K(+)-binding site is contributed by serine 162.

The protein belongs to the NnrE/AIBP family. K(+) is required as a cofactor.

The catalysed reaction is (6R)-NADHX = (6S)-NADHX. It carries out the reaction (6R)-NADPHX = (6S)-NADPHX. In terms of biological role, catalyzes the epimerization of the S- and R-forms of NAD(P)HX, a damaged form of NAD(P)H that is a result of enzymatic or heat-dependent hydration. This is a prerequisite for the S-specific NAD(P)H-hydrate dehydratase to allow the repair of both epimers of NAD(P)HX. This chain is NAD(P)H-hydrate epimerase, found in Drosophila melanogaster (Fruit fly).